The primary structure comprises 257 residues: Imidazole glycerol phosphate synthase subunit HisF (257 aa).

Catalysis depends on residues Asp11 and Asp130.

The protein belongs to the HisA/HisF family. As to quaternary structure, heterodimer of HisH and HisF.

Its subcellular location is the cytoplasm. It carries out the reaction 5-[(5-phospho-1-deoxy-D-ribulos-1-ylimino)methylamino]-1-(5-phospho-beta-D-ribosyl)imidazole-4-carboxamide + L-glutamine = D-erythro-1-(imidazol-4-yl)glycerol 3-phosphate + 5-amino-1-(5-phospho-beta-D-ribosyl)imidazole-4-carboxamide + L-glutamate + H(+). It participates in amino-acid biosynthesis; L-histidine biosynthesis; L-histidine from 5-phospho-alpha-D-ribose 1-diphosphate: step 5/9. Functionally, IGPS catalyzes the conversion of PRFAR and glutamine to IGP, AICAR and glutamate. The HisF subunit catalyzes the cyclization activity that produces IGP and AICAR from PRFAR using the ammonia provided by the HisH subunit. The sequence is that of Imidazole glycerol phosphate synthase subunit HisF from Shewanella sp. (strain MR-4).